A 620-amino-acid polypeptide reads, in one-letter code: MGKVIGIDLGTTNSAMAVYEGNEAKIIANKEGKNTTPSIVAFTDKGEILVGESAKRQAVTNPEKTIYSIKRIMGLMFNEDKAKEAEKRLPYKIVDRNGACAIEISGKVYTPQEISAKILMKLKEDAESYLGESVTEAVITVPAYFNDSQRKATKEAGTIAGLNVLRIINEPTSAALAYGLDKKESEKIMVYDLGGGTFDVTVLETGDNVVEVLATGGDAFLGGDDFDNRVIDFLSAEFKSETGIEIKNDVMALQRLKEAAENAKKELSSAMETEINLPFITADATGPKHLVKKLTRAKFESLTEDLMEETISKIESVIKDAGLTKNEISEVVMVGGSTRIPKVQERVKAFINKDLNKSVNPDEVVAVGASIQGGVLKGDVKDVLLLDVTPLSLGIETLGGVMTKVIDRGTTIPAKKSQVFSTAEDNQPAVSIMVLQGERELARDNKSLGKFDLQGIAPAPRGVPQIEVTFDIDANGILTVSAQDKNTGKSQEIKISGSSGLSDSEIEKMVKDAELHKEEDARKKEVIEARNHADSLAHQTQKSLDEHKTNLNENDANEIQNAINALKDCIKNDNATKAELEDKTKLLAQAAQKLGEAMANKNNAEQPKKKDDDVIDAEVE.

Position 197 is a phosphothreonine; by autocatalysis (Thr197). A disordered region spans residues 597 to 620; the sequence is AMANKNNAEQPKKKDDDVIDAEVE.

It belongs to the heat shock protein 70 family.

In terms of biological role, acts as a chaperone. The sequence is that of Chaperone protein DnaK from Helicobacter pylori (strain G27).